A 362-amino-acid polypeptide reads, in one-letter code: MTDAGKRILVMAGGTGGHVFPALAVAKYLAQQGWQVRWLGTADRMEARLVPQYGFDIDFIDIKGVRGNGLVRKLAAPFKVVRSILQAKAVIAEFKPDVVLGMGGFASGPGGVAAKLAGVPLVLHEQNAIPGMTNKLLSRIANQVLCAFKNTFTQVKAKVVGNPIRRELIALGAEPKQAADDALKVLVVGGSLGAKVFNDLMPEVVAALSKQQSITVWHQVGKDNLTGVKSAYQQQGQDGGVNVAEFIDDMEAAYRWADVVLCRAGALTVSELAAVGLPSILVPYPHAVDDHQTRNAQVLVEAGAAFLLPQAILDVNKLVSKLQLLANDRAELAQMGQRAREVAVLDATEQVAQVCIALAEKG.

UDP-N-acetyl-alpha-D-glucosamine is bound by residues 15–17 (TGG), Asn127, Arg165, Ser191, Ile247, 266–271 (ALTVSE), and Gln292.

Belongs to the glycosyltransferase 28 family. MurG subfamily.

It localises to the cell inner membrane. It catalyses the reaction di-trans,octa-cis-undecaprenyl diphospho-N-acetyl-alpha-D-muramoyl-L-alanyl-D-glutamyl-meso-2,6-diaminopimeloyl-D-alanyl-D-alanine + UDP-N-acetyl-alpha-D-glucosamine = di-trans,octa-cis-undecaprenyl diphospho-[N-acetyl-alpha-D-glucosaminyl-(1-&gt;4)]-N-acetyl-alpha-D-muramoyl-L-alanyl-D-glutamyl-meso-2,6-diaminopimeloyl-D-alanyl-D-alanine + UDP + H(+). Its pathway is cell wall biogenesis; peptidoglycan biosynthesis. In terms of biological role, cell wall formation. Catalyzes the transfer of a GlcNAc subunit on undecaprenyl-pyrophosphoryl-MurNAc-pentapeptide (lipid intermediate I) to form undecaprenyl-pyrophosphoryl-MurNAc-(pentapeptide)GlcNAc (lipid intermediate II). This is UDP-N-acetylglucosamine--N-acetylmuramyl-(pentapeptide) pyrophosphoryl-undecaprenol N-acetylglucosamine transferase from Shewanella sp. (strain MR-4).